Consider the following 128-residue polypeptide: Large ribosomal subunit protein bL12 (128 aa).

It belongs to the bacterial ribosomal protein bL12 family. Homodimer. Part of the ribosomal stalk of the 50S ribosomal subunit. Forms a multimeric L10(L12)X complex, where L10 forms an elongated spine to which 2 to 4 L12 dimers bind in a sequential fashion. Binds GTP-bound translation factors.

Forms part of the ribosomal stalk which helps the ribosome interact with GTP-bound translation factors. Is thus essential for accurate translation. This is Large ribosomal subunit protein bL12 from Streptomyces antibioticus.